The chain runs to 361 residues: Chorismate synthase (361 aa).

NADP(+)-binding residues include arginine 48 and arginine 54. FMN-binding positions include 131–133 (RSS), 243–244 (NA), glycine 287, 302–306 (KPTSS), and arginine 328.

It belongs to the chorismate synthase family. As to quaternary structure, homotetramer. The cofactor is FMNH2.

It carries out the reaction 5-O-(1-carboxyvinyl)-3-phosphoshikimate = chorismate + phosphate. The protein operates within metabolic intermediate biosynthesis; chorismate biosynthesis; chorismate from D-erythrose 4-phosphate and phosphoenolpyruvate: step 7/7. Its function is as follows. Catalyzes the anti-1,4-elimination of the C-3 phosphate and the C-6 proR hydrogen from 5-enolpyruvylshikimate-3-phosphate (EPSP) to yield chorismate, which is the branch point compound that serves as the starting substrate for the three terminal pathways of aromatic amino acid biosynthesis. This reaction introduces a second double bond into the aromatic ring system. This is Chorismate synthase from Rhodopseudomonas palustris (strain BisA53).